The following is a 603-amino-acid chain: Elongation factor 4 (603 aa).

The tr-type G domain maps to 7–189 (SRIRNFCIIA…SIVHLVPPPS (183 aa)). Residues 19–24 (DHGKST) and 136–139 (NKID) each bind GTP.

This sequence belongs to the TRAFAC class translation factor GTPase superfamily. Classic translation factor GTPase family. LepA subfamily.

It localises to the cell inner membrane. It catalyses the reaction GTP + H2O = GDP + phosphate + H(+). Required for accurate and efficient protein synthesis under certain stress conditions. May act as a fidelity factor of the translation reaction, by catalyzing a one-codon backward translocation of tRNAs on improperly translocated ribosomes. Back-translocation proceeds from a post-translocation (POST) complex to a pre-translocation (PRE) complex, thus giving elongation factor G a second chance to translocate the tRNAs correctly. Binds to ribosomes in a GTP-dependent manner. This chain is Elongation factor 4, found in Crocosphaera subtropica (strain ATCC 51142 / BH68) (Cyanothece sp. (strain ATCC 51142)).